The following is a 229-amino-acid chain: Ribonuclease T (229 aa).

Positions 23-197 (VIIDVETAGF…YDTERTAKLF (175 aa)) constitute an Exonuclease domain. Mg(2+) contacts are provided by aspartate 26, glutamate 28, histidine 184, and aspartate 189. The Proton donor/acceptor role is filled by histidine 184.

The protein belongs to the RNase T family. As to quaternary structure, homodimer. Mg(2+) serves as cofactor.

In terms of biological role, trims short 3' overhangs of a variety of RNA species, leaving a one or two nucleotide 3' overhang. Responsible for the end-turnover of tRNA: specifically removes the terminal AMP residue from uncharged tRNA (tRNA-C-C-A). Also appears to be involved in tRNA biosynthesis. The protein is Ribonuclease T of Haemophilus influenzae (strain 86-028NP).